Consider the following 757-residue polypeptide: Primary amine oxidase (757 aa).

An N-terminal signal peptide occupies residues 1-30 (MGSPSLYSARKTTLALAVALSFAWQAPVFA). Substrate-binding positions include 411-422 (YLDSGDYGMGTL) and 493-498 (VGNYDY). The active-site Proton acceptor is Asp413. Tyr496 (schiff-base intermediate with substrate; via topaquinone) is an active-site residue. Tyr496 carries the post-translational modification 2',4',5'-topaquinone. Cu cation is bound by residues His554 and His556. The Ca(2+) site is built by Asp563, Leu564, Asp565, Glu603, Tyr697, Asp700, Glu702, Asp708, and Ala709. Residue Asp563 participates in Mn(2+) binding. Residue Asp565 participates in Mn(2+) binding. The tract at residues 680–701 (PEGKYPNRSTHDTGLGQYSKDN) is disordered. Asp708 is a binding site for Mn(2+). His719 contacts Cu cation.

The protein belongs to the copper/topaquinone oxidase family. As to quaternary structure, homodimer. It depends on Cu cation as a cofactor. The cofactor is Zn(2+). Ca(2+) is required as a cofactor. Requires L-topaquinone as cofactor. Mn(2+) serves as cofactor. Post-translationally, topaquinone (TPQ) is generated by copper-dependent autoxidation of a specific tyrosyl residue.

It is found in the periplasm. It carries out the reaction a primary methyl amine + O2 + H2O = an aldehyde + H2O2 + NH4(+). The enzyme catalyses 2-phenylethylamine + O2 + H2O = 2-phenylacetaldehyde + H2O2 + NH4(+). The protein operates within amino-acid degradation; L-phenylalanine degradation; phenylacetate from L-phenylalanine: step 2/3. Its activity is regulated as follows. Inhibited by 2-hydrazinopyridine. Its function is as follows. The enzyme prefers aromatic over aliphatic amines. This is Primary amine oxidase (tynA) from Escherichia coli (strain K12).